Here is a 314-residue protein sequence, read N- to C-terminus: Replication initiation protein (314 aa).

The span at 1 to 18 shows a compositional bias: basic and acidic residues; that stretch reads MSKKAEEIQAKQSLEKEN. Residues 1–25 form a disordered region; the sequence is MSKKAEEIQAKQSLEKENSNFSKTG.

The protein belongs to the plasmid replication initiation factor family.

In terms of biological role, this protein is probably a specific topoisomerase involved in initiating replication. This protein is specifically required and may be rate-limiting for replication of the plasmid in vivo. The sequence is that of Replication initiation protein (repE) from Staphylococcus aureus.